The sequence spans 199 residues: Recombination protein RecR (199 aa).

The segment at 56 to 71 adopts a C4-type zinc-finger fold; it reads CATCGNVAQEELCNIC. The Toprim domain maps to 79–174; the sequence is SVICVVEEPK…KVTRLASGLP (96 aa).

This sequence belongs to the RecR family.

May play a role in DNA repair. It seems to be involved in an RecBC-independent recombinational process of DNA repair. It may act with RecF and RecO. The polypeptide is Recombination protein RecR (Streptomyces avermitilis (strain ATCC 31267 / DSM 46492 / JCM 5070 / NBRC 14893 / NCIMB 12804 / NRRL 8165 / MA-4680)).